Consider the following 783-residue polypeptide: Polyribonucleotide nucleotidyltransferase 1, mitochondrial (783 aa).

The transit peptide at 1-46 directs the protein to the mitochondrion; sequence MAACRYCCSCLRLRPLSDGPFCLPGRDRALTQLLVRALWSSTGSRA. N6-acetyllysine occurs at positions 250, 264, 285, and 289. The residue at position 552 (Lys552) is an N6-succinyllysine. In terms of domain architecture, KH spans 605–664; it reads PVVETVQVPLSKRAKFVGPGGYNLKKLQAETGVTISQVDEETFSVFAPTPSALHEARDFI. The 72-residue stretch at 679–750 folds into the S1 motif domain; the sequence is GAVYTATITE…ADGRMRLSRK (72 aa). Residues Ser754 and Ser782 each carry the phosphoserine modification.

It belongs to the polyribonucleotide nucleotidyltransferase family. In terms of assembly, homotrimer; in free form. Homooligomer. Component of the mitochondrial degradosome (mtEXO) complex which is a heteropentamer containing 2 copies of SUPV3L1 and 3 copies of PNPT1. As part of the mitochondrial degradosome complex, interacts with GRSF1 in an RNA-dependent manner; the interaction enhances the activity of the complex. Interacts with TCL1A; the interaction has no effect on PNPT1 exonuclease activity.

It localises to the cytoplasm. The protein resides in the mitochondrion matrix. Its subcellular location is the mitochondrion intermembrane space. The catalysed reaction is RNA(n+1) + phosphate = RNA(n) + a ribonucleoside 5'-diphosphate. RNA-binding protein implicated in numerous RNA metabolic processes. Catalyzes the phosphorolysis of single-stranded polyribonucleotides processively in the 3'-to-5' direction. Mitochondrial intermembrane factor with RNA-processing exoribonulease activity. Component of the mitochondrial degradosome (mtEXO) complex, that degrades 3' overhang double-stranded RNA with a 3'-to-5' directionality in an ATP-dependent manner. Involved in the degradation of non-coding mitochondrial transcripts (MT-ncRNA) and tRNA-like molecules. Required for correct processing and polyadenylation of mitochondrial mRNAs. Plays a role as a cytoplasmic RNA import factor that mediates the translocation of small RNA components like the 5S RNA, the RNA subunit of ribonuclease P and the mitochondrial RNA-processing (MRP) RNA, into the mitochondrial matrix. Plays a role in mitochondrial morphogenesis and respiration; regulates the expression of the electron transport chain (ETC) components at the mRNA and protein levels. In the cytoplasm, shows a 3'-to-5' exoribonuclease mediating mRNA degradation activity; degrades c-myc mRNA upon treatment with IFNB1/IFN-beta, resulting in a growth arrest in melanoma cells. Regulates the stability of specific mature miRNAs in melanoma cells; specifically and selectively degrades miR-221, preferentially. Also plays a role in RNA cell surveillance by cleaning up oxidized RNAs. Binds to the RNA subunit of ribonuclease P, MRP RNA and miR-221 microRNA. The chain is Polyribonucleotide nucleotidyltransferase 1, mitochondrial (PNPT1) from Pongo abelii (Sumatran orangutan).